Here is a 152-residue protein sequence, read N- to C-terminus: Large ribosomal subunit protein uL13 (152 aa).

It belongs to the universal ribosomal protein uL13 family. As to quaternary structure, part of the 50S ribosomal subunit.

Functionally, this protein is one of the early assembly proteins of the 50S ribosomal subunit, although it is not seen to bind rRNA by itself. It is important during the early stages of 50S assembly. In Wolbachia pipientis subsp. Culex pipiens (strain wPip), this protein is Large ribosomal subunit protein uL13.